Here is a 198-residue protein sequence, read N- to C-terminus: ATP-dependent Clp protease proteolytic subunit (198 aa).

Ser98 functions as the Nucleophile in the catalytic mechanism. Residue His123 is part of the active site.

Belongs to the peptidase S14 family. In terms of assembly, fourteen ClpP subunits assemble into 2 heptameric rings which stack back to back to give a disk-like structure with a central cavity, resembling the structure of eukaryotic proteasomes.

It localises to the cytoplasm. The enzyme catalyses Hydrolysis of proteins to small peptides in the presence of ATP and magnesium. alpha-casein is the usual test substrate. In the absence of ATP, only oligopeptides shorter than five residues are hydrolyzed (such as succinyl-Leu-Tyr-|-NHMec, and Leu-Tyr-Leu-|-Tyr-Trp, in which cleavage of the -Tyr-|-Leu- and -Tyr-|-Trp bonds also occurs).. In terms of biological role, cleaves peptides in various proteins in a process that requires ATP hydrolysis. Has a chymotrypsin-like activity. Plays a major role in the degradation of misfolded proteins. This Bacillus pumilus (strain SAFR-032) protein is ATP-dependent Clp protease proteolytic subunit.